The sequence spans 627 residues: tRNA uridine 5-carboxymethylaminomethyl modification enzyme MnmG (627 aa).

FAD contacts are provided by residues 13–18 (GGGHAG), V125, and S180. Position 274-288 (274-288 (GPRYCPSIEDKVVRF)) interacts with NAD(+). Q371 lines the FAD pocket.

This sequence belongs to the MnmG family. As to quaternary structure, homodimer. Heterotetramer of two MnmE and two MnmG subunits. FAD is required as a cofactor.

The protein localises to the cytoplasm. Its function is as follows. NAD-binding protein involved in the addition of a carboxymethylaminomethyl (cmnm) group at the wobble position (U34) of certain tRNAs, forming tRNA-cmnm(5)s(2)U34. The sequence is that of tRNA uridine 5-carboxymethylaminomethyl modification enzyme MnmG from Francisella tularensis subsp. holarctica (strain FTNF002-00 / FTA).